Consider the following 566-residue polypeptide: Chaperonin GroEL 1 (566 aa).

ATP-binding positions include 29-32, 86-90, Gly413, and Asp492; these read TIGP and DGTTT. The tract at residues 520–540 is disordered; it reads DKPEPPAPAGDGGGDPMGGMG. Residues 529–540 show a composition bias toward gly residues; sequence GDGGGDPMGGMG.

This sequence belongs to the chaperonin (HSP60) family. In terms of assembly, forms a cylinder of 14 subunits composed of two heptameric rings stacked back-to-back. Interacts with the co-chaperonin GroES.

The protein localises to the cytoplasm. The catalysed reaction is ATP + H2O + a folded polypeptide = ADP + phosphate + an unfolded polypeptide.. Together with its co-chaperonin GroES, plays an essential role in assisting protein folding. The GroEL-GroES system forms a nano-cage that allows encapsulation of the non-native substrate proteins and provides a physical environment optimized to promote and accelerate protein folding. This is Chaperonin GroEL 1 from Prochlorococcus marinus (strain MIT 9313).